The primary structure comprises 420 residues: Serine hydroxymethyltransferase (420 aa).

Residues Leu-121 and Gly-125 to Leu-127 contribute to the (6S)-5,6,7,8-tetrahydrofolate site. An N6-(pyridoxal phosphate)lysine modification is found at Lys-230. (6S)-5,6,7,8-tetrahydrofolate-binding positions include Glu-246 and Ser-354–Phe-356.

The protein belongs to the SHMT family. Homodimer. Pyridoxal 5'-phosphate serves as cofactor.

The protein resides in the cytoplasm. The enzyme catalyses (6R)-5,10-methylene-5,6,7,8-tetrahydrofolate + glycine + H2O = (6S)-5,6,7,8-tetrahydrofolate + L-serine. The protein operates within one-carbon metabolism; tetrahydrofolate interconversion. It functions in the pathway amino-acid biosynthesis; glycine biosynthesis; glycine from L-serine: step 1/1. In terms of biological role, catalyzes the reversible interconversion of serine and glycine with tetrahydrofolate (THF) serving as the one-carbon carrier. This reaction serves as the major source of one-carbon groups required for the biosynthesis of purines, thymidylate, methionine, and other important biomolecules. Also exhibits THF-independent aldolase activity toward beta-hydroxyamino acids, producing glycine and aldehydes, via a retro-aldol mechanism. The polypeptide is Serine hydroxymethyltransferase (Rickettsia massiliae (strain Mtu5)).